We begin with the raw amino-acid sequence, 242 residues long: Small ribosomal subunit protein uS2 (242 aa).

This sequence belongs to the universal ribosomal protein uS2 family.

The chain is Small ribosomal subunit protein uS2 from Photobacterium profundum (strain SS9).